The primary structure comprises 364 residues: Fructose-bisphosphate aldolase C (364 aa).

The residue at position 5 (Tyr-5) is a Phosphotyrosine. Residues Ser-36, Ser-39, and Ser-45 each carry the phosphoserine modification. Arg-56 contacts substrate. Lys-111 carries the N6-acetyllysine modification. Residue Ser-132 is modified to Phosphoserine. Lys-147 contacts substrate. Glu-188 serves as the catalytic Proton acceptor. Lys-230 functions as the Schiff-base intermediate with dihydroxyacetone-P in the catalytic mechanism.

This sequence belongs to the class I fructose-bisphosphate aldolase family. In terms of assembly, homotetramer. Interacts with ATP6V1E1. May interact with PLD2.

The catalysed reaction is beta-D-fructose 1,6-bisphosphate = D-glyceraldehyde 3-phosphate + dihydroxyacetone phosphate. The protein operates within carbohydrate degradation; glycolysis; D-glyceraldehyde 3-phosphate and glycerone phosphate from D-glucose: step 4/4. The sequence is that of Fructose-bisphosphate aldolase C (ALDOC) from Homo sapiens (Human).